A 205-amino-acid polypeptide reads, in one-letter code: HTH-type transcriptional repressor KstR2 (205 aa).

The HTH tetR-type domain occupies 10–70 (ASRRDELLQL…EVLRDFLDWL (61 aa)). Residues 33–52 (TVRDIADSAGILSGSLYHHF) constitute a DNA-binding region (H-T-H motif).

As to quaternary structure, homodimer.

Controls the expression of a small regulon that may play a role in the utilization of cholesterol. The chain is HTH-type transcriptional repressor KstR2 (kstR2) from Mycolicibacterium smegmatis (strain ATCC 700084 / mc(2)155) (Mycobacterium smegmatis).